The primary structure comprises 546 residues: Arginine--tRNA ligase (546 aa).

The 'HIGH' region signature appears at 122-132; the sequence is ANPTGPFTVGH.

It belongs to the class-I aminoacyl-tRNA synthetase family. Monomer.

The protein resides in the cytoplasm. It carries out the reaction tRNA(Arg) + L-arginine + ATP = L-arginyl-tRNA(Arg) + AMP + diphosphate. The polypeptide is Arginine--tRNA ligase (argS) (Thermotoga maritima (strain ATCC 43589 / DSM 3109 / JCM 10099 / NBRC 100826 / MSB8)).